The sequence spans 213 residues: Orotate phosphoribosyltransferase (213 aa).

A 5-phospho-alpha-D-ribose 1-diphosphate-binding site is contributed by K26. 34–35 contacts orotate; it reads FF. 5-phospho-alpha-D-ribose 1-diphosphate is bound by residues 72-73, R99, K100, K103, H105, and 124-132; these read YK and DDVITAGTA. T128 and R156 together coordinate orotate.

The protein belongs to the purine/pyrimidine phosphoribosyltransferase family. PyrE subfamily. As to quaternary structure, homodimer. It depends on Mg(2+) as a cofactor.

It carries out the reaction orotidine 5'-phosphate + diphosphate = orotate + 5-phospho-alpha-D-ribose 1-diphosphate. It participates in pyrimidine metabolism; UMP biosynthesis via de novo pathway; UMP from orotate: step 1/2. Its function is as follows. Catalyzes the transfer of a ribosyl phosphate group from 5-phosphoribose 1-diphosphate to orotate, leading to the formation of orotidine monophosphate (OMP). This is Orotate phosphoribosyltransferase from Vibrio parahaemolyticus serotype O3:K6 (strain RIMD 2210633).